The chain runs to 395 residues: Protein-arginine rhamnosyltransferase (395 aa).

Residues 19–22 (NYGD), Y205, Q272, and 288–292 (RGEDS) each bind dTDP-beta-L-rhamnose. The Proton acceptor role is filled by D22. E290 is an active-site residue.

Belongs to the glycosyltransferase 104 family.

It carries out the reaction dTDP-beta-L-rhamnose + L-arginyl-[protein] = N(omega)-(alpha-L-rhamnosyl)-L-arginyl-[protein] + dTDP + H(+). Functionally, protein-arginine rhamnosyltransferase that catalyzes the transfer of a single rhamnose to elongation factor P (EF-P) on 'Lys-32', a modification required for EF-P-dependent rescue of polyproline stalled ribosomes. In Shewanella oneidensis (strain ATCC 700550 / JCM 31522 / CIP 106686 / LMG 19005 / NCIMB 14063 / MR-1), this protein is Protein-arginine rhamnosyltransferase.